A 610-amino-acid polypeptide reads, in one-letter code: Elongation factor 4 (610 aa).

The tr-type G domain occupies asparagine 14 to lysine 196. GTP contacts are provided by residues aspartate 26 to threonine 31 and asparagine 143 to aspartate 146.

This sequence belongs to the TRAFAC class translation factor GTPase superfamily. Classic translation factor GTPase family. LepA subfamily.

Its subcellular location is the cell inner membrane. It catalyses the reaction GTP + H2O = GDP + phosphate + H(+). Required for accurate and efficient protein synthesis under certain stress conditions. May act as a fidelity factor of the translation reaction, by catalyzing a one-codon backward translocation of tRNAs on improperly translocated ribosomes. Back-translocation proceeds from a post-translocation (POST) complex to a pre-translocation (PRE) complex, thus giving elongation factor G a second chance to translocate the tRNAs correctly. Binds to ribosomes in a GTP-dependent manner. The protein is Elongation factor 4 of Legionella pneumophila (strain Lens).